The primary structure comprises 302 residues: Capsid protein (302 aa).

The segment at 217–302 (FHSGDAAKQS…HSSPQQTPKK (86 aa)) is disordered. The span at 254–271 (PRAGTPSSQKSGQSGQTT) shows a compositional bias: low complexity. Over residues 288-302 (HKSTPHSSPQQTPKK) the composition is skewed to polar residues.

The protein resides in the virion. Capsid protein self-assembles to form a flexuous, filamentous capsid (Potential). The capsid encapsulates the single-stranded RNA genome. The polypeptide is Capsid protein (Botryotinia fuckeliana (Noble rot fungus)).